Here is a 203-residue protein sequence, read N- to C-terminus: Sarcosine oxidase subunit gamma (203 aa).

The protein belongs to the SoxG family. As to quaternary structure, heterotetramer composed of subunits alpha (SoxA), beta (SoxB), gamma (SoxG) and delta (SoxD).

It localises to the cytoplasm. The catalysed reaction is sarcosine + (6S)-5,6,7,8-tetrahydrofolate + O2 = (6R)-5,10-methylene-5,6,7,8-tetrahydrofolate + glycine + H2O2. It catalyses the reaction sarcosine + O2 + H2O = formaldehyde + glycine + H2O2. Its function is as follows. In the presence of tetrahydrofolate, catalyzes the oxidative demethylation of sarcosine to yield glycine, 5,10-methylenetetrahydrofolate and hydrogen peroxide. In the absence of tetrahydrofolate, catalyzes the oxidative demethylation of sarcosine to yield glycine, formaldehyde and hydrogen peroxide. The polypeptide is Sarcosine oxidase subunit gamma (Corynebacterium sp. (strain P-1)).